The chain runs to 302 residues: MITILGPTACGKTRLAVSLAYRLGTEIISADSRQIYRGMDIGTGKDLADYQVGGTTIPCHLIDIRPAGDKYNLFAYQHDFHQAYASILARGMDPILCGGTGMYIEAVLKGYHLPDVPPNPTLRDRLQGKSLTELTLILAAYGPLHNKTDVDSAQRAIRAIEIAEYIKNNPAESTEFPPIDSLIIGLDLDRDTRRKRITDRLHARMHEGMIEEVKGLLDSGIPADDLIYYGLEYKFVTLYLTGQTDYESMFTGLETAIHQFAKRQMTWFRGMERRGFLIHWIDALLPADEQCEAVMKLYTANG.

Position 6 to 13 (6 to 13) interacts with ATP; the sequence is GPTACGKT. Substrate is bound at residue 8 to 13; sequence TACGKT. Interaction with substrate tRNA regions lie at residues 31 to 34 and 154 to 158; these read DSRQ and QRAIR.

It belongs to the IPP transferase family. As to quaternary structure, monomer. The cofactor is Mg(2+).

The catalysed reaction is adenosine(37) in tRNA + dimethylallyl diphosphate = N(6)-dimethylallyladenosine(37) in tRNA + diphosphate. Its function is as follows. Catalyzes the transfer of a dimethylallyl group onto the adenine at position 37 in tRNAs that read codons beginning with uridine, leading to the formation of N6-(dimethylallyl)adenosine (i(6)A). This chain is tRNA dimethylallyltransferase 1, found in Porphyromonas gingivalis (strain ATCC 33277 / DSM 20709 / CIP 103683 / JCM 12257 / NCTC 11834 / 2561).